We begin with the raw amino-acid sequence, 160 residues long: Ribosomal RNA large subunit methyltransferase H (160 aa).

S-adenosyl-L-methionine contacts are provided by residues Leu-76, Gly-108, and Phe-127–Trp-132.

The protein belongs to the RNA methyltransferase RlmH family. As to quaternary structure, homodimer.

It localises to the cytoplasm. The catalysed reaction is pseudouridine(1915) in 23S rRNA + S-adenosyl-L-methionine = N(3)-methylpseudouridine(1915) in 23S rRNA + S-adenosyl-L-homocysteine + H(+). In terms of biological role, specifically methylates the pseudouridine at position 1915 (m3Psi1915) in 23S rRNA. The protein is Ribosomal RNA large subunit methyltransferase H of Mesorhizobium japonicum (strain LMG 29417 / CECT 9101 / MAFF 303099) (Mesorhizobium loti (strain MAFF 303099)).